We begin with the raw amino-acid sequence, 274 residues long: Serine acetyltransferase (274 aa).

This sequence belongs to the transferase hexapeptide repeat family.

It is found in the cytoplasm. The enzyme catalyses L-serine + acetyl-CoA = O-acetyl-L-serine + CoA. The protein operates within amino-acid biosynthesis; L-cysteine biosynthesis; L-cysteine from L-serine: step 1/2. The polypeptide is Serine acetyltransferase (cysE) (Buchnera aphidicola subsp. Acyrthosiphon pisum (strain APS) (Acyrthosiphon pisum symbiotic bacterium)).